Here is a 258-residue protein sequence, read N- to C-terminus: Ribosomal RNA small subunit methyltransferase A (258 aa).

Residues Asn12, Leu14, Gly38, Glu59, Asp83, and Asn100 each coordinate S-adenosyl-L-methionine.

It belongs to the class I-like SAM-binding methyltransferase superfamily. rRNA adenine N(6)-methyltransferase family. RsmA subfamily.

It is found in the cytoplasm. It carries out the reaction adenosine(1518)/adenosine(1519) in 16S rRNA + 4 S-adenosyl-L-methionine = N(6)-dimethyladenosine(1518)/N(6)-dimethyladenosine(1519) in 16S rRNA + 4 S-adenosyl-L-homocysteine + 4 H(+). Its function is as follows. Specifically dimethylates two adjacent adenosines (A1518 and A1519) in the loop of a conserved hairpin near the 3'-end of 16S rRNA in the 30S particle. May play a critical role in biogenesis of 30S subunits. The protein is Ribosomal RNA small subunit methyltransferase A of Metamycoplasma arthritidis (strain 158L3-1) (Mycoplasma arthritidis).